We begin with the raw amino-acid sequence, 111 residues long: Large ribosomal subunit protein uL22 (111 aa).

The protein belongs to the universal ribosomal protein uL22 family. In terms of assembly, part of the 50S ribosomal subunit.

Its function is as follows. This protein binds specifically to 23S rRNA; its binding is stimulated by other ribosomal proteins, e.g. L4, L17, and L20. It is important during the early stages of 50S assembly. It makes multiple contacts with different domains of the 23S rRNA in the assembled 50S subunit and ribosome. The globular domain of the protein is located near the polypeptide exit tunnel on the outside of the subunit, while an extended beta-hairpin is found that lines the wall of the exit tunnel in the center of the 70S ribosome. This is Large ribosomal subunit protein uL22 from Chlamydia trachomatis serovar A (strain ATCC VR-571B / DSM 19440 / HAR-13).